The sequence spans 459 residues: 11S globulin seed storage protein 2 (459 aa).

A signal peptide spans 1-21; it reads MVAFKFLLALSLSLLVSAAIA. 2 disulfide bridges follow: Cys34-Cys67 and Cys110-Cys284. 2 consecutive Cupin type-1 domains span residues 37 to 237 and 290 to 439; these read QRIS…ETIR and TNVE…NQAQ. Positions 118 to 139 are disordered; sequence RSQRTMERTEASEQQDRGSVRD. Residues 121–139 show a composition bias toward basic and acidic residues; that stretch reads RTMERTEASEQQDRGSVRD.

It belongs to the 11S seed storage protein (globulins) family. In terms of assembly, homohexamer. Each subunit is composed of an acidic and a basic chain derived from a single precursor and linked by a disulfide bond. As to expression, expressed in seeds (at protein level). Expressed in seeds.

Its function is as follows. Seed storage protein. The sequence is that of 11S globulin seed storage protein 2 from Sesamum indicum (Oriental sesame).